The following is a 597-amino-acid chain: Replication protein E1 (597 aa).

The Nuclear localization signal motif lies at 75 to 77 (KRK). Serine 81, serine 91, and serine 104 each carry phosphoserine; by host. The Nuclear export signal motif lies at 90–99 (LSPQLASISL). Positions 119–141 (QSSNEADDSLEGQRQVEPLPGRE) are disordered. Residues 137–300 (LPGREENGAD…TLITHHLAAE (164 aa)) form a DNA-binding region region. The SF3 helicase domain occupies 400–550 (IEFILFLADF…FPLDDNGNPG (151 aa)). 426 to 433 (GPPNTGKS) lines the ATP pocket. Lysine 507 is covalently cross-linked (Glycyl lysine isopeptide (Lys-Gly) (interchain with G-Cter in SUMO)). The segment at 574–597 (PEDGEDGETQRGLRLTARGTTESV) is disordered.

This sequence belongs to the papillomaviridae E1 protein family. Can form hexamers. Interacts with E2 protein; this interaction increases E1 DNA binding specificity. Interacts with host DNA polymerase subunit POLA2. Interacts with host single stranded DNA-binding protein RPA1. Interacts with host TOP1; this interaction stimulates the enzymatic activity of TOP1. In terms of processing, phosphorylated. Sumoylated.

The protein localises to the host nucleus. It carries out the reaction Couples ATP hydrolysis with the unwinding of duplex DNA by translocating in the 3'-5' direction.. It catalyses the reaction ATP + H2O = ADP + phosphate + H(+). Its function is as follows. ATP-dependent DNA 3'-5' helicase required for initiation of viral DNA replication. It forms a complex with the viral E2 protein. The E1-E2 complex binds to the replication origin which contains binding sites for both proteins. During the initial step, a dimer of E1 interacts with a dimer of protein E2 leading to a complex that binds the viral origin of replication with high specificity. Then, a second dimer of E1 displaces the E2 dimer in an ATP-dependent manner to form the E1 tetramer. Following this, two E1 monomers are added to each half of the site, which results in the formation of two E1 trimers on the viral ori. Subsequently, two hexamers will be created. The double hexamer acts as a bi-directional helicase machinery and unwinds the viral DNA and then recruits the host DNA polymerase to start replication. In Canis lupus familiaris (Dog), this protein is Replication protein E1.